Here is a 517-residue protein sequence, read N- to C-terminus: MWWTSLVFSVLLFDLIFISNCDYIHLPGNSDIPDLKLQSGYLNANENGTQKMFYFLLEARDIPVGEASLIIWFNGGPGCSSLSAFFEEFGPLYVNFGGKSLFENVHSWYHKANILFLESPIGVGFSYDTEQSNFTKVNDDSIAEQNFNSVIDFFQRKHSSYVNHDFFIAAESYGGVYGPMLSALVVDSISKREFPNENFKGLIIGNGFMNVKLSTNTMILWSAYHDRTSPDEWDEIKEKCATSGAHDVDYYDFMQFMKTTNKMDYLADNSTECGRLIEPLLGQFSETFDGYDFFNYYHDCYTNFSIPNATDPIKETLAQIPRRRISALFNKHSTDGQASYRCWADDALHKYLNLKEVQNALGIDRAWKDRKKKWEVCNMPIYDQYVMTHQDMTPFFSKIFDKFTGPAFRVLIYSGDIDTACNYLADGYFVRDLASIHGFKKTLKHGPWYHSEHKVIAGNFMRYEGANHLGSKLSIDVVTVKGSGHFVPLDRPGPALQMVHNFLTGKPGKMTNYTSPV.

A signal peptide spans 1–21 (MWWTSLVFSVLLFDLIFISNC). Residue S172 is part of the active site. Residue N269 is glycosylated (N-linked (GlcNAc...) asparagine). Residues D418 and H485 contribute to the active site.

It belongs to the peptidase S10 family.

This is Serine carboxypeptidase ctsa-3.2 from Caenorhabditis elegans.